A 135-amino-acid chain; its full sequence is Transcription antitermination protein NusB (135 aa).

It belongs to the NusB family.

Involved in transcription antitermination. Required for transcription of ribosomal RNA (rRNA) genes. Binds specifically to the boxA antiterminator sequence of the ribosomal RNA (rrn) operons. The polypeptide is Transcription antitermination protein NusB (Nocardioides sp. (strain ATCC BAA-499 / JS614)).